The sequence spans 605 residues: MEADIITNLRCRLKEAEEERLKAAQYGLQLVESQNELQNQLDKCRNEMMTMTESYEQEKYTLQREVELKSRMLESLSCECEAIKQQQKMHLEKLEEQLSRSHGQEVNELKTKIEKLKVELDEARLSEKQLKHQVDHQKELLSCKSEELRVMSERVQESMSSEMLALQIELTEMESMKTTLKEEVNELQYRQEQLELLITNLMRQVDRLKEEKEEREKEAVSYYNALEKARVANQDLQVQLDQALQQALDPNSKGNSLFAEVEDRRAAMERQLISMKVKYQSLKKQNVFNREQMQRMKLQIATLLQMKGSQTEFEQQERLLAMLEQKNGEIKHLLGEIRNLEKFKNLYDSMESKPSVDSGTLEDNTYYTDLLQMKLDNLNKEIESTKGELSIQRMKALFESQRALDIERKLFANERCLQLSESENMKLRAKLDELKLKYEPEETVEVPVLKKRREVLPVDITTAKDACVNNSALGGEVYRLPPQKEETQSCPNSLEDNNLQLEKSVSIYTPVVSLSPHKNLPVDMQLKKEKKCVKLIGVPADAEALSERSGNTPNSPRLAAESKLQTEVKEGKETSSKLEKETCKKLHPILYVSSKSTPETQCPQQ.

N-acetylmethionine is present on Met-1. Residues 2 to 442 are a coiled coil; the sequence is EADIITNLRC…ELKLKYEPEE (441 aa). A phosphoserine mark is found at Ser-513, Ser-515, and Ser-555. Residues 544 to 580 form a disordered region; sequence ALSERSGNTPNSPRLAAESKLQTEVKEGKETSSKLEK. Positions 564 to 580 are enriched in basic and acidic residues; it reads LQTEVKEGKETSSKLEK.

Belongs to the Spindly family. Interacts with KNTC1 and ZW10. These interactions appear weak and may be transient or indirect. Interacts with dynein intermediate chain and dynactin (DCTN1). Interacts with the catalytically active form of USP45. Post-translationally, monoubiquitinated with'Lys-48' linkage. Deubiquitinated by USP45.

Its subcellular location is the cytoplasm. The protein localises to the cytoskeleton. It localises to the microtubule organizing center. The protein resides in the centrosome. It is found in the chromosome. Its subcellular location is the centromere. The protein localises to the kinetochore. It localises to the nucleus. The protein resides in the spindle pole. Required for the localization of dynein and dynactin to the mitotic kintochore. Dynein is believed to control the initial lateral interaction between the kinetochore and spindle microtubules and to facilitate the subsequent formation of end-on kinetochore-microtubule attachments mediated by the NDC80 complex. Also required for correct spindle orientation. Does not appear to be required for the removal of spindle assembly checkpoint (SAC) proteins from the kinetochore upon bipolar spindle attachment. Acts as an adapter protein linking the dynein motor complex to various cargos and converts dynein from a non-processive to a highly processive motor in the presence of dynactin. Facilitates the interaction between dynein and dynactin and activates dynein processivity (the ability to move along a microtubule for a long distance without falling off the track). Plays a role in cell migration. This Homo sapiens (Human) protein is Protein Spindly.